A 372-amino-acid chain; its full sequence is Probable dual-specificity RNA methyltransferase RlmN (372 aa).

A disordered region spans residues 1-20 (MTSLPLTPVNPDAPARRAAM). Catalysis depends on Glu112, which acts as the Proton acceptor. A Radical SAM core domain is found at 118-357 (YPDRVTVCLS…STTVRDTRGR (240 aa)). An intrachain disulfide couples Cys125 to Cys363. 3 residues coordinate [4Fe-4S] cluster: Cys132, Cys136, and Cys139. Residues 187 to 188 (GE), Ser221, 244 to 246 (SLH), and Asn320 contribute to the S-adenosyl-L-methionine site. Cys363 acts as the S-methylcysteine intermediate in catalysis.

The protein belongs to the radical SAM superfamily. RlmN family. It depends on [4Fe-4S] cluster as a cofactor.

The protein resides in the cytoplasm. It carries out the reaction adenosine(2503) in 23S rRNA + 2 reduced [2Fe-2S]-[ferredoxin] + 2 S-adenosyl-L-methionine = 2-methyladenosine(2503) in 23S rRNA + 5'-deoxyadenosine + L-methionine + 2 oxidized [2Fe-2S]-[ferredoxin] + S-adenosyl-L-homocysteine. It catalyses the reaction adenosine(37) in tRNA + 2 reduced [2Fe-2S]-[ferredoxin] + 2 S-adenosyl-L-methionine = 2-methyladenosine(37) in tRNA + 5'-deoxyadenosine + L-methionine + 2 oxidized [2Fe-2S]-[ferredoxin] + S-adenosyl-L-homocysteine. In terms of biological role, specifically methylates position 2 of adenine 2503 in 23S rRNA and position 2 of adenine 37 in tRNAs. The sequence is that of Probable dual-specificity RNA methyltransferase RlmN from Salinispora tropica (strain ATCC BAA-916 / DSM 44818 / JCM 13857 / NBRC 105044 / CNB-440).